A 274-amino-acid chain; its full sequence is Putative pyruvate, phosphate dikinase regulatory protein (274 aa).

ADP is bound at residue 153-160 (GISRTSKT).

Belongs to the pyruvate, phosphate/water dikinase regulatory protein family. PDRP subfamily.

The catalysed reaction is N(tele)-phospho-L-histidyl/L-threonyl-[pyruvate, phosphate dikinase] + ADP = N(tele)-phospho-L-histidyl/O-phospho-L-threonyl-[pyruvate, phosphate dikinase] + AMP + H(+). It carries out the reaction N(tele)-phospho-L-histidyl/O-phospho-L-threonyl-[pyruvate, phosphate dikinase] + phosphate + H(+) = N(tele)-phospho-L-histidyl/L-threonyl-[pyruvate, phosphate dikinase] + diphosphate. In terms of biological role, bifunctional serine/threonine kinase and phosphorylase involved in the regulation of the pyruvate, phosphate dikinase (PPDK) by catalyzing its phosphorylation/dephosphorylation. The chain is Putative pyruvate, phosphate dikinase regulatory protein from Bartonella henselae (strain ATCC 49882 / DSM 28221 / CCUG 30454 / Houston 1) (Rochalimaea henselae).